The chain runs to 53 residues: Large ribosomal subunit protein eL40 (53 aa).

The protein belongs to the eukaryotic ribosomal protein eL40 family.

The protein is Large ribosomal subunit protein eL40 of Staphylothermus marinus (strain ATCC 43588 / DSM 3639 / JCM 9404 / F1).